A 150-amino-acid chain; its full sequence is Ribonuclease pancreatic delta-type (150 aa).

Positions 1–25 (MGLEKSFILFSLLVLVLGWVQPSLG) are cleaved as a signal peptide. Arg-35 is a substrate binding site. The active-site Proton acceptor is His-37. 4 disulfide bridges follow: Cys-51/Cys-110, Cys-65/Cys-121, Cys-83/Cys-136, and Cys-90/Cys-98. Substrate is bound by residues 66–70 (KRVNT), Lys-91, and Arg-111. Residue His-145 is the Proton donor of the active site.

It belongs to the pancreatic ribonuclease family. As to quaternary structure, monomer.

It localises to the secreted. The enzyme catalyses an [RNA] containing cytidine + H2O = an [RNA]-3'-cytidine-3'-phosphate + a 5'-hydroxy-ribonucleotide-3'-[RNA].. It carries out the reaction an [RNA] containing uridine + H2O = an [RNA]-3'-uridine-3'-phosphate + a 5'-hydroxy-ribonucleotide-3'-[RNA].. Endonuclease that catalyzes the cleavage of RNA on the 3' side of pyrimidine nucleotides. Acts on single-stranded and double-stranded RNA. This is Ribonuclease pancreatic delta-type (Rnase1d) from Rattus norvegicus (Rat).